The following is a 143-amino-acid chain: MLSFILIQNRQGKTRLAKWYVPYSDEEKIKLKGEIHRLVAPRDQKYQSNFVEFRNHKVVYRRYAGLFFCACVDTNDNELAYLEAIHFFVEVLDSFFGNVCELDLVFNFYKVYAILDEVFLAGEIEETSKQVVLTRLEHLDKLE.

The protein belongs to the adaptor complexes small subunit family. As to quaternary structure, adaptor protein complex 2 (AP-2) is a heterotetramer composed of two large adaptins (alpha-type subunit APL3 and beta-type subunit APL1), a medium chain (mu-type subunit APM4) and a small adaptin (sigma-type subunit APS2).

The protein localises to the cell membrane. It localises to the membrane. The protein resides in the coated pit. Its function is as follows. Component of the adaptor complexes which link clathrin to receptors in coated vesicles. Clathrin-associated protein complexes are believed to interact with the cytoplasmic tails of membrane proteins, leading to their selection and concentration. In Neurospora crassa (strain ATCC 24698 / 74-OR23-1A / CBS 708.71 / DSM 1257 / FGSC 987), this protein is AP-2 complex subunit sigma (aps-2).